Here is an 85-residue protein sequence, read N- to C-terminus: Kappa-theraphotoxin-Cg1d (85 aa).

The first 21 residues, 1–21 (MKVSVLITLAVLGVMFVWASA), serve as a signal peptide directing secretion. The propeptide occupies 22–51 (AELEERGSDQRDSPAWLKSMERIFQSEERE). Intrachain disulfides connect Cys-52/Cys-66, Cys-59/Cys-71, and Cys-65/Cys-78.

The protein belongs to the neurotoxin 10 (Hwtx-1) family. 28 (Jztx-11) subfamily. As to expression, expressed by the venom gland.

It is found in the secreted. Functionally, probable ion channel inhibitor. The protein is Kappa-theraphotoxin-Cg1d of Chilobrachys guangxiensis (Chinese earth tiger tarantula).